A 351-amino-acid chain; its full sequence is Cytoplasmic dynein 2 light intermediate chain 1 (351 aa).

Residues 304-335 (TLKAIQDPARDPQYAESEVDEMRVQKDQELEQ) are disordered. A compositionally biased stretch (basic and acidic residues) spans 323–335 (DEMRVQKDQELEQ).

Belongs to the dynein light intermediate chain family. In terms of assembly, light intermediate chain of the cytoplasmic dynein complex 2, a multisubunit complex composed at least of eleven different proteins. The cytoplasmic dynein 2 complex consists of two catalytic heavy chains (HCs) and a number of non-catalytic subunits presented by intermediate chains (ICs), light intermediate chains (LICs) and light chains (LCs). Among them, a heavy chain (DYNC2H1), two intermediate chains (DYNC2I2 and DYNC2I1), a light intermediate chain (DYNC2LI1), and a light chain (DYNLT2B) are unique to the dynein-2 complex, but a subset of light chains are also shared by dynein-1 and dynein-2 complexes. Dynein-2 complex is built around two copies of cytoplasmic dynein 2 heavy chain 1 (DYNC2H1). The C-terminal region forms the motor domain, which converts the energy from ATP hydrolysis into movement. Its N-terminal region forms the tail, an extended structure that binds the other subunits and holds the two heavy chains in a homodimer. Interacts with DYNC2H1 (via N-terminus); this interaction stabilizes the dynein-2 complex structure.

The protein resides in the cytoplasm. Its subcellular location is the cell projection. It is found in the cilium. The protein localises to the cytoskeleton. It localises to the cilium basal body. The protein resides in the cilium axoneme. Its subcellular location is the microtubule organizing center. It is found in the centrosome. In terms of biological role, acts as one of several non-catalytic accessory components of the cytoplasmic dynein 2 complex (dynein-2 complex), a motor protein complex that drives the movement of cargos along microtubules within cilia and flagella in concert with the intraflagellar transport (IFT) system, facilitating the assembly of these organelles. Involved in the regulation of ciliary length. The polypeptide is Cytoplasmic dynein 2 light intermediate chain 1 (Dync2li1) (Rattus norvegicus (Rat)).